The chain runs to 27 residues: AnmTX Sco 9a-1 (27 aa).

At Pro6 the chain carries Hydroxyproline. Intrachain disulfides connect Cys7–Cys18 and Cys10–Cys25.

In terms of biological role, has analgesic and anti-inflammatory activity in vivo. At a dose of 0.1 and 1 mg/kg, exhibits anti-inflammatory activity by reducing the volume of edema during 24 h better than the nonsteroidal anti-inflammatory drug, Diclofenac, at dose of 1 mg/kg in a mouse model of acute local lambda-carrageenan-induced inflammation. At a dose of 1 mg/kg, reduces the content of tumor necrosis factor-alpha (TNF-alpha). Demonstrates a significant analgesic effect on acute pain sensitivity in the carrageenan-induced thermal hyperalgesia model at doses of 0.1 and 1 mg/kg. Not toxic in mice, however stimulates exploratory motivation and active search behavior, and demonstrates an anti-anxiety effect. Does not exhibit any effect on currents of rat acid-sensing ion channels ASIC1a or ASIC3. The sequence is that of AnmTX Sco 9a-1 from Stomphia coccinea (Spotted swimming anemone).